A 179-amino-acid polypeptide reads, in one-letter code: Replication restart protein DnaT (179 aa).

The interval 156-179 is disordered; the sequence is GGLPKRDVNTVSEPDSQIPPGFRG.

This sequence belongs to the DnaT family. Homooligomerizes. Interacts with PriB. Component of the replication restart primosome. Primosome assembly occurs via a 'hand-off' mechanism. PriA binds to replication forks, subsequently PriB then DnaT bind; DnaT then displaces ssDNA to generate the helicase loading substrate.

Its function is as follows. Involved in the restart of stalled replication forks, which reloads the replicative helicase on sites other than the origin of replication. Can function in multiple replication restart pathways. Displaces ssDNA from a PriB-ssDNA complex. Probably forms a spiral filament on ssDNA. In Escherichia coli O81 (strain ED1a), this protein is Replication restart protein DnaT.